The sequence spans 360 residues: GDSL esterase/lipase At1g58430 (360 aa).

An N-terminal signal peptide occupies residues M1–A23. N22 is a glycosylation site (N-linked (GlcNAc...) asparagine). The active-site Nucleophile is the S42. N-linked (GlcNAc...) asparagine glycans are attached at residues N104 and N326. Active-site residues include D334 and H337.

Belongs to the 'GDSL' lipolytic enzyme family.

It localises to the secreted. This Arabidopsis thaliana (Mouse-ear cress) protein is GDSL esterase/lipase At1g58430.